We begin with the raw amino-acid sequence, 165 residues long: Lipoprotein signal peptidase (165 aa).

A run of 3 helical transmembrane segments spans residues 12-32, 70-90, and 102-122; these read WLWVVVAVLIIDLGSKFLILQ, WFFAGIAVGICVVLAVLMYRS, and ALIIGGALGNLFDRLWHGFVV. Active-site residues include D123 and D141. Residues 137–157 traverse the membrane as a helical segment; that stretch reads FNLADSAICIGAALIVLEGFL.

Belongs to the peptidase A8 family.

The protein localises to the cell inner membrane. It catalyses the reaction Release of signal peptides from bacterial membrane prolipoproteins. Hydrolyzes -Xaa-Yaa-Zaa-|-(S,diacylglyceryl)Cys-, in which Xaa is hydrophobic (preferably Leu), and Yaa (Ala or Ser) and Zaa (Gly or Ala) have small, neutral side chains.. It functions in the pathway protein modification; lipoprotein biosynthesis (signal peptide cleavage). Functionally, this protein specifically catalyzes the removal of signal peptides from prolipoproteins. This chain is Lipoprotein signal peptidase, found in Klebsiella aerogenes (strain ATCC 13048 / DSM 30053 / CCUG 1429 / JCM 1235 / KCTC 2190 / NBRC 13534 / NCIMB 10102 / NCTC 10006 / CDC 819-56) (Enterobacter aerogenes).